The following is a 145-amino-acid chain: Basic phospholipase A2 S2-22 (145 aa).

The signal sequence occupies residues 1-19 (MYPAHLLVLLAVCVSLLGA). A propeptide spanning residues 20–27 (SDIPPQPL) is cleaved from the precursor. Cystine bridges form between Cys38-Cys99, Cys54-Cys144, Cys56-Cys72, Cys71-Cys127, Cys78-Cys120, Cys88-Cys113, and Cys106-Cys118. Residues Tyr55, Gly57, and Gly59 each coordinate Ca(2+). The active site involves His75. Asp76 is a Ca(2+) binding site. Asp121 is a catalytic residue.

This sequence belongs to the phospholipase A2 family. Group I subfamily. D49 sub-subfamily. The cofactor is Ca(2+). Expressed by the venom gland.

It is found in the secreted. The catalysed reaction is a 1,2-diacyl-sn-glycero-3-phosphocholine + H2O = a 1-acyl-sn-glycero-3-phosphocholine + a fatty acid + H(+). In terms of biological role, snake venom phospholipase A2 (PLA2) that inhibits collagen-induced platelet aggregation. PLA2 catalyzes the calcium-dependent hydrolysis of the 2-acyl groups in 3-sn-phosphoglycerides. This Austrelaps superbus (Lowland copperhead snake) protein is Basic phospholipase A2 S2-22.